The chain runs to 910 residues: MTTSLPPQYEPTVTEAKWQTAWEESHAFKADPDRPGEPYCVVIPPPNVTGSLHMGHAFESSLIDTLVRYHRMRGDNTLWLPGTDHASIAVQTILERQLKAEGKTRDDLGREKFLERAWQWKAESGSTIVNQLRRLGVSVDWTRERFTMDEGLSQAVKTAFIKLYEEGLIYRGNYLVNWCPASQSAVSDLEVENQEVDGHLWYFRYPLTDGSGELVVATTRPETMLGDTGVAVNPHDERYAAMVGKTITLPLVNREIPIVADELVDPEFGTGCVKVTPAHDPNDFVMGQRHNLPFINLLNKDGSLNENGGDFAGQDRFEARKNVVQALEAQGFLVKIEPYRHSVPYGDRGKVPVEPLLSTQWFVKIESLAQNALACLDEDNSPNFVPERWGKVYRDWLVKLKDWCISRQLWWGHQIPAWYVISETNGAITDHTPFIVAYDEAEALAKAKAEYGPTVQLQQDPDVLDTWFSSGLWPFSTMGWPEQTDDLAKYYPTSTLVTGFDIIFFWVARMTMMAGHFTGQIPFKDVYIHGLVRDENGKKMSKSANNGIDPLLLINKYGTDALRYTLIREVAGAGQDISLQYDRQKDESESVEASRNFANKLWNAARFVMMNLDGQTPQQLGLAPGEDLELADRWILSRLNQVIQQTREQIEDYGLGEAAKGLYEFIWGDFCDWYIELAKPRLWNKEGGDVGTQRQLVARQVLAHTLDSIIKLLHPFMPHITEELWQTLHQAEGQFLALQAYPTVNQSLVDPALETQFALLIETLRTIRNLRAEAGIKPGAMVTVILQSENDQERQTLQLGETYIRDIGKVENLQVVSQLPPEQTQAIAGVVDTIQVLIPLSGLVDLDILRNKIQKTLDKVTKEYESIEKRLSNPGFVNKAPEEVIAGAKESLNAAAVQRQMLQERLKMLG.

A 'HIGH' region motif is present at residues 46 to 56 (PNVTGSLHMGH). Residues 539-543 (KMSKS) carry the 'KMSKS' region motif. Residue K542 participates in ATP binding. A coiled-coil region spans residues 845-909 (DLDILRNKIQ…QMLQERLKML (65 aa)).

Belongs to the class-I aminoacyl-tRNA synthetase family. ValS type 1 subfamily. Monomer.

The protein resides in the cytoplasm. The enzyme catalyses tRNA(Val) + L-valine + ATP = L-valyl-tRNA(Val) + AMP + diphosphate. In terms of biological role, catalyzes the attachment of valine to tRNA(Val). As ValRS can inadvertently accommodate and process structurally similar amino acids such as threonine, to avoid such errors, it has a 'posttransfer' editing activity that hydrolyzes mischarged Thr-tRNA(Val) in a tRNA-dependent manner. The sequence is that of Valine--tRNA ligase from Synechocystis sp. (strain ATCC 27184 / PCC 6803 / Kazusa).